We begin with the raw amino-acid sequence, 291 residues long: Bifunctional protein FolD (291 aa).

NADP(+) contacts are provided by residues 166–168 (GAS) and Ile-232.

The protein belongs to the tetrahydrofolate dehydrogenase/cyclohydrolase family. In terms of assembly, homodimer.

It catalyses the reaction (6R)-5,10-methylene-5,6,7,8-tetrahydrofolate + NADP(+) = (6R)-5,10-methenyltetrahydrofolate + NADPH. It carries out the reaction (6R)-5,10-methenyltetrahydrofolate + H2O = (6R)-10-formyltetrahydrofolate + H(+). It functions in the pathway one-carbon metabolism; tetrahydrofolate interconversion. Its function is as follows. Catalyzes the oxidation of 5,10-methylenetetrahydrofolate to 5,10-methenyltetrahydrofolate and then the hydrolysis of 5,10-methenyltetrahydrofolate to 10-formyltetrahydrofolate. The protein is Bifunctional protein FolD of Photorhabdus laumondii subsp. laumondii (strain DSM 15139 / CIP 105565 / TT01) (Photorhabdus luminescens subsp. laumondii).